The primary structure comprises 432 residues: MQVSVETTQGLGRRVTITIAADSIETAVKSELVNVAKKVRIDGFRKGKVPMNIVAQRYGASVRQDVLGDLMSRNFIDAIIKEKINPAGAPTYVPGEYKLGEDFTYSVEFEVYPEVELQGLEAIEVEKPIVEVTDADVDGMLDTLRKQQATWKDKDGAVEAEDRVTIDFTGSVDGEEFEGGKASDFVLAMGQGRMIPGFEDGIKGHKAGEEFTIDVTFPEEYHAENLKGKAAKFAINLKKVEERELPELTAEFIKRFGVEDGSVEGLRAEVRKNMERELKSAIRNRVKSQAIEGLVKANDIDVPAALIDSEIDVLRRQAAQRFGGNEKQALELPRELFEEQAKRRVVVGLLLGEVIRTNELKADEERVKGLIEEMASAYEDPKEVIEFYSKNKELMDNMRNVALEEQAVEAVLAKAKVTEKETTFNELMNQQA.

The PPIase FKBP-type domain maps to 161 to 246 (EDRVTIDFTG…LKKVEERELP (86 aa)).

Belongs to the FKBP-type PPIase family. Tig subfamily. Homodimer and monomer. In vivo most of the ribosomes are in complex with monomeric TF. Uncomplexed TF, however, is in a monomer-dimer equilibrium with approximately two thirds of TF existing in a dimeric state.

It localises to the cytoplasm. It catalyses the reaction [protein]-peptidylproline (omega=180) = [protein]-peptidylproline (omega=0). Functionally, involved in protein export. Acts as a chaperone by maintaining the newly synthesized protein in an open conformation. Functions as a peptidyl-prolyl cis-trans isomerase. This Escherichia coli O139:H28 (strain E24377A / ETEC) protein is Trigger factor.